Reading from the N-terminus, the 62-residue chain is Sucrase-isomaltase, intestinal (62 aa).

Residues 2-12 lie on the Cytoplasmic side of the membrane; sequence ARKKFSGLEIX. Phosphoserine; by PKA is present on Ser-7. The chain crosses the membrane as a helical; Signal-anchor for type II membrane protein span at residues 13–32; that stretch reads LIVLFAIVLSIAIALVVVXA. The Lumenal segment spans residues 33 to 38; sequence SKXPAV. Tyr-59 bears the Sulfotyrosine mark.

Belongs to the glycosyl hydrolase 31 family. The resulting sucrase and isomaltase subunits stay associated with one another in a complex by non-covalent linkages. In terms of processing, the precursor is proteolytically cleaved when exposed to pancreatic proteases in the intestinal lumen. Sulfated.

It is found in the apical cell membrane. It catalyses the reaction Hydrolysis of sucrose and maltose by an alpha-D-glucosidase-type action.. The enzyme catalyses Hydrolysis of (1-&gt;6)-alpha-D-glucosidic linkages in some oligosaccharides produced from starch and glycogen by alpha-amylase, and in isomaltose.. In terms of biological role, plays an important role in the final stage of carbohydrate digestion. Isomaltase activity is specific for both alpha-1,4- and alpha-1,6-oligosaccharides. The protein is Sucrase-isomaltase, intestinal (SI) of Sus scrofa (Pig).